The chain runs to 126 residues: UPF0102 protein MXAN_3551 (126 aa).

It belongs to the UPF0102 family.

The protein is UPF0102 protein MXAN_3551 of Myxococcus xanthus (strain DK1622).